A 783-amino-acid chain; its full sequence is Type 4 coupling protein DotL (783 aa).

Residues 47–67 traverse the membrane as a helical segment; that stretch reads VSYYFSEAATFLLIMGGIFFL. Residues 100-500 are ATPase domain; sequence NIARGITFFG…ICMKLEDPTE (401 aa). The tract at residues 671 to 773 is interaction with IcmS/IcmW; that stretch reads VEGALTIFSK…SAKISAEREK (103 aa).

As to quaternary structure, the T4BSS is a complex nanomachine composed of several subcomplexes. This subunit is part of the Type IV Coupling Complex (T4CC), a subcomplex composed of the DotLMNYZ core and the IcmSW-LvgA adapter subunits, linked by the C-terminal tail of DotL. Six DotLMNYZ hetero-pentameric units may assemble into a hexameric nanomachine, forming an inner membrane channel for effectors to pass through. Interacts directly with DotM. Interacts directly, via its C-terminal region, with the type IV adapter proteins IcmS and IcmW. Also interacts with DotN and LvgA via its C-terminal region.

It localises to the cell inner membrane. In terms of biological role, component of the Dot/Icm type IVB secretion system (T4BSS), which is used to inject bacterial effector proteins into eukaryotic host cells. Part of a subcomplex which recruits effector proteins and delivers them to the core transmembrane subcomplex. Plays a central role in the assembly of the subcomplex. Required for the recruitment of IcmS and IcmW to the inner membrane and for the translocation of adapter-dependent substrates. May have ATPase activity. The protein is Type 4 coupling protein DotL of Legionella pneumophila subsp. pneumophila (strain Philadelphia 1 / ATCC 33152 / DSM 7513).